We begin with the raw amino-acid sequence, 301 residues long: D-alanine--D-alanine ligase (301 aa).

The ATP-grasp domain occupies 99 to 294 (KSVLEANGIR…FSELIDMIIQ (196 aa)). 126–181 (INELGYPVVVKPTHGGSSVATFIVKEEKEIENCVSEAFKWDSEVMIEKFIKGDEIT) contributes to the ATP binding site. Mg(2+) contacts are provided by Asp248, Glu261, and Asn263.

The protein belongs to the D-alanine--D-alanine ligase family. Mg(2+) serves as cofactor. The cofactor is Mn(2+).

The protein resides in the cytoplasm. The enzyme catalyses 2 D-alanine + ATP = D-alanyl-D-alanine + ADP + phosphate + H(+). It functions in the pathway cell wall biogenesis; peptidoglycan biosynthesis. In terms of biological role, cell wall formation. The protein is D-alanine--D-alanine ligase of Clostridium beijerinckii (strain ATCC 51743 / NCIMB 8052) (Clostridium acetobutylicum).